The sequence spans 300 residues: Acetyl-coenzyme A carboxylase carboxyl transferase subunit beta 2 (300 aa).

Positions 26–294 (VWVKCPSCRE…SGAYSSEAVA (269 aa)) constitute a CoA carboxyltransferase N-terminal domain. 4 residues coordinate Zn(2+): Cys30, Cys33, Cys49, and Cys51. The segment at 30-51 (CPSCRELIYHKQLAERMKVCRC) adopts a C4-type zinc-finger fold.

The protein belongs to the AccD/PCCB family. Acetyl-CoA carboxylase is a heterohexamer composed of biotin carboxyl carrier protein (AccB), biotin carboxylase (AccC) and two subunits each of ACCase subunit alpha (AccA) and ACCase subunit beta (AccD). Zn(2+) serves as cofactor.

The protein localises to the cytoplasm. It carries out the reaction N(6)-carboxybiotinyl-L-lysyl-[protein] + acetyl-CoA = N(6)-biotinyl-L-lysyl-[protein] + malonyl-CoA. It functions in the pathway lipid metabolism; malonyl-CoA biosynthesis; malonyl-CoA from acetyl-CoA: step 1/1. Its function is as follows. Component of the acetyl coenzyme A carboxylase (ACC) complex. Biotin carboxylase (BC) catalyzes the carboxylation of biotin on its carrier protein (BCCP) and then the CO(2) group is transferred by the transcarboxylase to acetyl-CoA to form malonyl-CoA. The protein is Acetyl-coenzyme A carboxylase carboxyl transferase subunit beta 2 of Roseiflexus castenholzii (strain DSM 13941 / HLO8).